A 381-amino-acid chain; its full sequence is Alkanesulfonate monooxygenase (381 aa).

The protein belongs to the SsuD family. In terms of assembly, homotetramer.

The enzyme catalyses an alkanesulfonate + FMNH2 + O2 = an aldehyde + FMN + sulfite + H2O + 2 H(+). Its function is as follows. Catalyzes the desulfonation of aliphatic sulfonates. The polypeptide is Alkanesulfonate monooxygenase (Escherichia fergusonii (strain ATCC 35469 / DSM 13698 / CCUG 18766 / IAM 14443 / JCM 21226 / LMG 7866 / NBRC 102419 / NCTC 12128 / CDC 0568-73)).